We begin with the raw amino-acid sequence, 688 residues long: Glycine--tRNA ligase beta subunit (688 aa).

The protein belongs to the class-II aminoacyl-tRNA synthetase family. Tetramer of two alpha and two beta subunits.

It localises to the cytoplasm. It carries out the reaction tRNA(Gly) + glycine + ATP = glycyl-tRNA(Gly) + AMP + diphosphate. The protein is Glycine--tRNA ligase beta subunit of Syntrophomonas wolfei subsp. wolfei (strain DSM 2245B / Goettingen).